A 527-amino-acid chain; its full sequence is MGKFHSFVNVVALSLSLSGRVFGAIGPVTDLTISNADVTPDGITRAAVLAGGVFPGPLITGNKGDEFQINVIDNLTNETMLKSTTIHWHGIFQAGTNWADGAAFVNQCPIATGNSFLYDFTVPDQAGTFWYHSHLSTQYCDGLRGPLVVYDPDDANASLYDVDDDTTVITLADWYHTAAKLGPAFPAGPDSVLINGLGRFSGDGGGATNLTVITVTQGKRYRFRLVSISCDPNFTFSIDGHNMTIIEVGGVNHEALDVDSIQIFAGQRYSFILNANQSIDNYWIRAIPNTGTTDTTGGVNSAILRYDTAEEIEPTTNATTSVIPLTETDLVPLDNPAAPGDPQVGGVDLAMSLDFSFNGSNFFINNETFVPPTVPVLLQILSGAQDAASLLPNGSVYTLPSNSTIEISFPIITTDGALNAPGAPHPFHLHGHTFSVVRSAGSSTFNYANPVRRDTVSTGNSGDNVTIRFTTDNPGPWFLHCHIDFHLDAGFAIVFAEDTADTASANPVPTAWSDLCPTYDALDSSDL.

Positions 1–23 (MGKFHSFVNVVALSLSLSGRVFG) are cleaved as a signal peptide. The Plastocyanin-like 1 domain occupies 25-150 (IGPVTDLTIS…DGLRGPLVVY (126 aa)). Residues Asn74 and Asn77 are each glycosylated (N-linked (GlcNAc...) asparagine). Positions 87, 89, 132, and 134 each coordinate Cu cation. 2 cysteine pairs are disulfide-bonded: Cys108/Cys516 and Cys140/Cys230. N-linked (GlcNAc...) asparagine glycans are attached at residues Asn156, Asn209, Asn233, Asn242, Asn276, Asn317, Asn358, Asn366, Asn393, and Asn402. The Plastocyanin-like 2 domain maps to 162 to 306 (VDDDTTVITL…GGVNSAILRY (145 aa)). Residues 373-498 (TVPVLLQILS…AGFAIVFAED (126 aa)) form the Plastocyanin-like 3 domain. Cu cation-binding residues include His425, His428, His430, His480, Cys481, His482, and His486.

This sequence belongs to the multicopper oxidase family. The cofactor is Cu cation.

The protein resides in the secreted. The catalysed reaction is 4 hydroquinone + O2 = 4 benzosemiquinone + 2 H2O. Functionally, lignin degradation and detoxification of lignin-derived products. The chain is Laccase-5 (LCC5) from Trametes versicolor (White-rot fungus).